The following is a 349-amino-acid chain: Putative ABC transporter permease protein MJ0087 (349 aa).

Transmembrane regions (helical) follow at residues 15 to 35 (IIFG…ALCV), 69 to 89 (IFAA…MQCI), 100 to 120 (MGIS…FGFG), 135 to 155 (MITI…LLLA), 166 to 186 (ILAG…IQYF), 206 to 226 (AIWT…IYFM), 254 to 274 (LIGM…LGII), 295 to 315 (FLIP…DTFA), and 318 to 338 (IIAP…APMF).

Belongs to the binding-protein-dependent transport system permease family. FecCD subfamily.

The protein resides in the cell membrane. Probably part of a binding-protein-dependent transport system. Probably responsible for the translocation of the substrate across the membrane. The polypeptide is Putative ABC transporter permease protein MJ0087 (Methanocaldococcus jannaschii (strain ATCC 43067 / DSM 2661 / JAL-1 / JCM 10045 / NBRC 100440) (Methanococcus jannaschii)).